The following is a 305-amino-acid chain: Homoserine O-acetyltransferase (305 aa).

Catalysis depends on cysteine 142, which acts as the Acyl-thioester intermediate. Lysine 163 and serine 192 together coordinate substrate. The active-site Proton acceptor is histidine 235. Glutamate 237 is an active-site residue. Arginine 249 provides a ligand contact to substrate.

This sequence belongs to the MetA family.

The protein resides in the cytoplasm. It carries out the reaction L-homoserine + acetyl-CoA = O-acetyl-L-homoserine + CoA. The protein operates within amino-acid biosynthesis; L-methionine biosynthesis via de novo pathway; O-acetyl-L-homoserine from L-homoserine: step 1/1. Transfers an acetyl group from acetyl-CoA to L-homoserine, forming acetyl-L-homoserine. In Cereibacter sphaeroides (strain KD131 / KCTC 12085) (Rhodobacter sphaeroides), this protein is Homoserine O-acetyltransferase.